Reading from the N-terminus, the 621-residue chain is Glutamyl-tRNA(Gln) amidotransferase subunit E (621 aa).

This sequence belongs to the GatB/GatE family. GatE subfamily. As to quaternary structure, heterodimer of GatD and GatE.

It catalyses the reaction L-glutamyl-tRNA(Gln) + L-glutamine + ATP + H2O = L-glutaminyl-tRNA(Gln) + L-glutamate + ADP + phosphate + H(+). Allows the formation of correctly charged Gln-tRNA(Gln) through the transamidation of misacylated Glu-tRNA(Gln) in organisms which lack glutaminyl-tRNA synthetase. The reaction takes place in the presence of glutamine and ATP through an activated gamma-phospho-Glu-tRNA(Gln). The GatDE system is specific for glutamate and does not act on aspartate. This chain is Glutamyl-tRNA(Gln) amidotransferase subunit E, found in Methanobrevibacter smithii (strain ATCC 35061 / DSM 861 / OCM 144 / PS).